A 124-amino-acid polypeptide reads, in one-letter code: Large ribosomal subunit protein bL12 (124 aa).

The protein belongs to the bacterial ribosomal protein bL12 family. Homodimer. Part of the ribosomal stalk of the 50S ribosomal subunit. Forms a multimeric L10(L12)X complex, where L10 forms an elongated spine to which 2 to 4 L12 dimers bind in a sequential fashion. Binds GTP-bound translation factors.

Forms part of the ribosomal stalk which helps the ribosome interact with GTP-bound translation factors. Is thus essential for accurate translation. This is Large ribosomal subunit protein bL12 from Aromatoleum aromaticum (strain DSM 19018 / LMG 30748 / EbN1) (Azoarcus sp. (strain EbN1)).